Consider the following 183-residue polypeptide: MSRKARDPIVLPQGVEVSLQNNEIVVKGPKGSLTQTLAPEVVVEIKDKEVFVSPAPNVVDRPSRVQGLFWALISNMVQGVSAGFEKRLEMIGVGFRAAVQGSVLDLSIGVSHPTKIPIPADIQVTVEKNTLISVKGINKQLVGEFAANIRAKRRPEPYKGKGIRYENEYVRRKAGKAAKTGKK.

This sequence belongs to the universal ribosomal protein uL6 family. Part of the 50S ribosomal subunit.

In terms of biological role, this protein binds to the 23S rRNA, and is important in its secondary structure. It is located near the subunit interface in the base of the L7/L12 stalk, and near the tRNA binding site of the peptidyltransferase center. In Chlamydia felis (strain Fe/C-56) (Chlamydophila felis), this protein is Large ribosomal subunit protein uL6.